The following is a 364-amino-acid chain: Solute carrier family 35 member C2 (364 aa).

A run of 2 helical transmembrane segments spans residues 14–34 (AALTLGLVLLYYCFSIGITFY) and 42–62 (FHFPLFMTMLHLAVIFLFSAL). An N-linked (GlcNAc...) asparagine glycan is attached at Asn102. Helical transmembrane passes span 104–124 (SFLYITVSLYTMTKSSAVLFI), 136–156 (LRAALVLVVLLIAGGLFMFTY), 166–186 (FALVLGASFIGGIRWTLTQIL), 202–222 (FHLQPLMFLGLFPLFAIFEGL), 238–258 (LLLWVLGSLLLGGILAFGLGF), 272–292 (LSIAGIFKEVCTLLLAAHLLG), and 295–315 (ISLLNWLGFALCLSGISLHVA). Ser335 and Ser336 each carry phosphoserine.

This sequence belongs to the TPT transporter family. SLC35C subfamily.

The protein resides in the golgi apparatus. Its subcellular location is the cis-Golgi network membrane. It is found in the endoplasmic reticulum-Golgi intermediate compartment membrane. May play an important role in the cellular response to tissue hypoxia. May be either a GDP-fucose transporter that competes with SLC35C1 for GDP-fucose, or a factor that otherwise enhances the fucosylation of Notch and is required for optimal Notch signaling in mammalian cells. This is Solute carrier family 35 member C2 (Slc35c2) from Mus musculus (Mouse).